Consider the following 359-residue polypeptide: Isopentenyl-diphosphate delta-isomerase (359 aa).

Position 11–12 (11–12 (RK)) interacts with substrate. FMN contacts are provided by residues Ser-68, 69–71 (GMT), Ser-99, and Asn-127. 99-101 (SQR) serves as a coordination point for substrate. Residue Gln-163 participates in substrate binding. Glu-164 contacts Mg(2+). Residues Lys-199, Thr-229, 278–280 (GIR), and 299–300 (AL) each bind FMN.

The protein belongs to the IPP isomerase type 2 family. As to quaternary structure, homooctamer. Dimer of tetramers. Requires FMN as cofactor. NADPH is required as a cofactor. It depends on Mg(2+) as a cofactor.

The protein resides in the cytoplasm. It carries out the reaction isopentenyl diphosphate = dimethylallyl diphosphate. With respect to regulation, inhibited by 3,4-epoxy-3-methylbutyl diphosphate (EIPP). Its function is as follows. Involved in the biosynthesis of isoprenoids. Catalyzes the 1,3-allylic rearrangement of the homoallylic substrate isopentenyl (IPP) to its allylic isomer, dimethylallyl diphosphate (DMAPP). This Methanocaldococcus jannaschii (strain ATCC 43067 / DSM 2661 / JAL-1 / JCM 10045 / NBRC 100440) (Methanococcus jannaschii) protein is Isopentenyl-diphosphate delta-isomerase.